The primary structure comprises 470 residues: Aminodeoxychorismate synthase component 1 (470 aa).

The protein belongs to the anthranilate synthase component I family. Monomer. Heterodimer consisting of two non-identical subunits: a glutamine amidotransferase subunit (PabA) and a aminodeoxychorismate synthase subunit (PabB). Requires Mg(2+) as cofactor.

The enzyme catalyses chorismate + L-glutamine = 4-amino-4-deoxychorismate + L-glutamate. It participates in cofactor biosynthesis; tetrahydrofolate biosynthesis; 4-aminobenzoate from chorismate: step 1/2. Part of a heterodimeric complex that catalyzes the two-step biosynthesis of 4-amino-4-deoxychorismate (ADC), a precursor of p-aminobenzoate (PABA) and tetrahydrofolate. In the first step, a glutamine amidotransferase (PabA) generates ammonia as a substrate that, along with chorismate, is used in the second step, catalyzed by aminodeoxychorismate synthase (PabB) to produce ADC. The sequence is that of Aminodeoxychorismate synthase component 1 (pabB) from Bacillus subtilis (strain 168).